Reading from the N-terminus, the 172-residue chain is MLVILAFIIVFHIVSTALLFISTIDNAWWVGDGFSADIWRVCTNSTNCTEINDLSSTEEFSGYSVMQAVQATMILSTILSCISFLIFLLQLFRLKQGERFVLTAIIQLMSCLCVMIGASVYTDRRQDLHHQNSQLYYLLQEGSYGYSFILAWVAFAFTFISGLMYMILRKRK.

4 consecutive transmembrane segments (helical) span residues 1–21 (MLVILAFIIVFHIVSTALLFI), 72–92 (TMILSTILSCISFLIFLLQLF), 100–120 (FVLTAIIQLMSCLCVMIGASV), and 148–168 (FILAWVAFAFTFISGLMYMIL).

It belongs to the PMP-22/EMP/MP20 family. As to quaternary structure, interacts with PTK2; regulates PTK2 activation and localization. Interacts with ITGB3; regulates the levels of the heterodimer ITGA5-ITGB3 integrin surface expression. Interacts with P2RX7 (via C-terminus). Interacts with ITGB1; the interaction may be direct or indirect and ITGB1 has a heterodimer form. In terms of tissue distribution, expressed in glomeruli.

The protein resides in the golgi apparatus membrane. It localises to the cell membrane. It is found in the apical cell membrane. Its subcellular location is the membrane raft. The protein localises to the cytoplasm. The protein resides in the nucleus. It localises to the perinuclear region. Its function is as follows. Functions as a key regulator of cell membrane composition by regulating protein surface expression. Also, plays a role in regulation of processes including cell migration, cell proliferation, cell contraction and cell adhesion. Regulates transepithelial migration of neutrophils into the alveolar lumen, potentially via mediation of cell surface expression of adhesion markers and lipid raft formation. Negatively regulates caveolae formation by reducing CAV1 expression and CAV1 amount by increasing lysosomal degradation. Facilitates surface trafficking and the formation of lipid rafts bearing GPI-anchor proteins. Regulates surface expression of MHC1 and ICAM1 proteins increasing susceptibility to T-cell mediated cytotoxicity. Regulates the plasma membrane expression of the integrin heterodimers ITGA6-ITGB1, ITGA5-ITGB3 and ITGA5-ITGB1 resulting in modulation of cell-matrix adhesion. Also regulates many processes through PTK2. Regulates blood vessel endothelial cell migration and angiogenesis by regulating VEGF protein expression through PTK2 activation. Regulates cell migration and cell contraction through PTK2 and SRC activation. Regulates focal adhesion density, F-actin conformation and cell adhesion capacity through interaction with PTK2. Positively regulates cell proliferation. Plays a role during cell death and cell blebbing. Promotes angiogenesis and vasculogenesis through induction of VEGFA via a HIF1A-dependent pathway. Also plays a role in embryo implantation by regulating surface trafficking of integrin heterodimer ITGA5-ITGB3. Plays a role in placental angiogenesis and uterine natural killer cell regulation at the maternal-fetal placental interface, however not required in the maternal tissues for a viable pregnancy. Involved in the early stages of embryogenic development and cardiogenesis, potentially via regulation of epithelial-mesenchymal transition timing. May play a role in glomerular filtration. The protein is Epithelial membrane protein 2 (Emp2) of Rattus norvegicus (Rat).